A 79-amino-acid polypeptide reads, in one-letter code: Acyl carrier protein (79 aa).

Positions 2-77 constitute a Carrier domain; the sequence is SDIEARVKKI…NAIDYANTHQ (76 aa). The residue at position 37 (serine 37) is an O-(pantetheine 4'-phosphoryl)serine.

Belongs to the acyl carrier protein (ACP) family. In terms of processing, 4'-phosphopantetheine is transferred from CoA to a specific serine of apo-ACP by AcpS. This modification is essential for activity because fatty acids are bound in thioester linkage to the sulfhydryl of the prosthetic group.

The protein localises to the cytoplasm. It functions in the pathway lipid metabolism; fatty acid biosynthesis. In terms of biological role, carrier of the growing fatty acid chain in fatty acid biosynthesis. This is Acyl carrier protein from Paracidovorax citrulli (strain AAC00-1) (Acidovorax citrulli).